The primary structure comprises 485 residues: Glutamyl-tRNA(Gln) amidotransferase subunit A (485 aa).

Catalysis depends on charge relay system residues Lys-75 and Ser-150. The active-site Acyl-ester intermediate is Ser-174.

Belongs to the amidase family. GatA subfamily. Heterotrimer of A, B and C subunits.

The catalysed reaction is L-glutamyl-tRNA(Gln) + L-glutamine + ATP + H2O = L-glutaminyl-tRNA(Gln) + L-glutamate + ADP + phosphate + H(+). Functionally, allows the formation of correctly charged Gln-tRNA(Gln) through the transamidation of misacylated Glu-tRNA(Gln) in organisms which lack glutaminyl-tRNA synthetase. The reaction takes place in the presence of glutamine and ATP through an activated gamma-phospho-Glu-tRNA(Gln). In Picosynechococcus sp. (strain ATCC 27264 / PCC 7002 / PR-6) (Agmenellum quadruplicatum), this protein is Glutamyl-tRNA(Gln) amidotransferase subunit A.